The primary structure comprises 330 residues: Acrylyl-CoA reductase AcuI (330 aa).

NADP(+)-binding positions include tyrosine 44, 159 to 162 (AGGV), 181 to 183 (TGR), arginine 201, leucine 247, and serine 272.

This sequence belongs to the zinc-containing alcohol dehydrogenase family. Acrylyl-CoA reductase subfamily. Homodimer.

It localises to the cytoplasm. The enzyme catalyses propanoyl-CoA + NADP(+) = acryloyl-CoA + NADPH + H(+). Probably catalyzes the NADPH-dependent reduction of acrylyl-CoA to propanoyl-CoA. Restores acrylate resistance when expressed in an E.coli strain K12 acuI deletion. This Ruegeria pomeroyi (strain ATCC 700808 / DSM 15171 / DSS-3) (Silicibacter pomeroyi) protein is Acrylyl-CoA reductase AcuI (acuI).